The primary structure comprises 431 residues: C4-dicarboxylate transport protein (431 aa).

Transmembrane regions (helical) follow at residues 8 to 28, 44 to 64, 78 to 98, 148 to 168, 188 to 208, 222 to 242, 307 to 327, and 355 to 375; these read ILYV…HFWP, LIKM…IAGM, LLYF…AAHL, GDIL…AAIG, IVHV…AFTI, LIGT…GAIA, IYMT…LTLL, and AATL…ILGI.

The protein belongs to the dicarboxylate/amino acid:cation symporter (DAACS) (TC 2.A.23) family.

The protein resides in the cell inner membrane. Responsible for the transport of dicarboxylates such as succinate, fumarate, and malate from the periplasm across the membrane. This chain is C4-dicarboxylate transport protein, found in Cupriavidus pinatubonensis (strain JMP 134 / LMG 1197) (Cupriavidus necator (strain JMP 134)).